The following is a 179-amino-acid chain: Large ribosomal subunit protein uL5 (179 aa).

It belongs to the universal ribosomal protein uL5 family. In terms of assembly, part of the 50S ribosomal subunit; part of the 5S rRNA/L5/L18/L25 subcomplex. Contacts the 5S rRNA and the P site tRNA. Forms a bridge to the 30S subunit in the 70S ribosome.

In terms of biological role, this is one of the proteins that bind and probably mediate the attachment of the 5S RNA into the large ribosomal subunit, where it forms part of the central protuberance. In the 70S ribosome it contacts protein S13 of the 30S subunit (bridge B1b), connecting the 2 subunits; this bridge is implicated in subunit movement. Contacts the P site tRNA; the 5S rRNA and some of its associated proteins might help stabilize positioning of ribosome-bound tRNAs. This Anoxybacillus flavithermus (strain DSM 21510 / WK1) protein is Large ribosomal subunit protein uL5.